The chain runs to 732 residues: Eukaryotic translation initiation factor 3 subunit B (732 aa).

The interval 1-94 (MTTLESLKIE…LFIEMESVSA (94 aa)) is sufficient for interaction with HCR1 and TIF32. The sufficient for interaction with PIC8 stretch occupies residues 1-219 (MTTLESLKIE…GVTSWGGPNF (219 aa)). Positions 37 to 120 (NFLVVDGAPV…HRLLVNSLND (84 aa)) constitute an RRM domain. WD repeat units follow at residues 185-224 (ARKNWSNDVVKFSPKGTYLLSFHDQGVTSWGGPNFDRLKR), 237-280 (PTEK…LMKT), 439-481 (EMKD…KFFA), and 507-554 (VDQQ…KTLN).

It belongs to the eIF-3 subunit B family. Component of the eukaryotic translation initiation factor 3 (eIF-3) complex.

It is found in the cytoplasm. RNA-binding component of the eukaryotic translation initiation factor 3 (eIF-3) complex, which is involved in protein synthesis of a specialized repertoire of mRNAs and, together with other initiation factors, stimulates binding of mRNA and methionyl-tRNAi to the 40S ribosome. The eIF-3 complex specifically targets and initiates translation of a subset of mRNAs involved in cell proliferation. The sequence is that of Eukaryotic translation initiation factor 3 subunit B from Kluyveromyces lactis (strain ATCC 8585 / CBS 2359 / DSM 70799 / NBRC 1267 / NRRL Y-1140 / WM37) (Yeast).